Here is a 393-residue protein sequence, read N- to C-terminus: UDP-sulfoquinovose synthase (393 aa).

NAD(+)-binding positions include Asp31–Thr35, Asp74–Ile75, Arg100, and Asn118. Position 100 (Arg100) interacts with substrate. Substrate-binding residues include Thr144 and Tyr182. Residue Thr144 is part of the active site. NAD(+)-binding residues include Tyr182 and Lys186. Tyr182 acts as the Proton acceptor in catalysis. The active site involves Lys186. Gln209 is a binding site for substrate. Val212 provides a ligand contact to NAD(+). Residues Val238–Arg241, Thr253–Tyr255, and Arg326–Glu328 each bind substrate.

Belongs to the NAD(P)-dependent epimerase/dehydratase family. NAD(+) serves as cofactor.

It catalyses the reaction sulfite + UDP-alpha-D-glucose + H(+) = UDP-alpha-D-6-sulfoquinovose + H2O. Functionally, catalyzes the biosynthesis of UDP-sulfoquinovose by the transfer of sulfite to UDP-glucose. Important for the assembly of the S-layer N-glycans. The reaction probably occurs through an NAD(+)-dependent oxidation/dehydration/enolization/sulfite addition process. In vitro, in the absence of sulfite, UDP-D-glucose is converted via UDP-4-keto-D-glucose to UDP-D-glucose-5,6-ene. The sequence is that of UDP-sulfoquinovose synthase from Sulfolobus acidocaldarius (strain ATCC 33909 / DSM 639 / JCM 8929 / NBRC 15157 / NCIMB 11770).